We begin with the raw amino-acid sequence, 592 residues long: Anaphase-promoting complex subunit 8 (592 aa).

TPR repeat units lie at residues 66 to 99 (EYYKYILAKNYFDLKEYRRCSDVLIDCNKYQLPI), 160 to 193 (QQQQQQQQQKIEQCQEFKQLFQFYKKLYIENKKD), 291 to 324 (TYILAQTAIGNYNLRAYDIGEELFERLIELEPNR), 359 to 392 (PETCCIIGNYYSLKLEHDKAILYFQRALKLNDRY), 393 to 426 (LSAWTLIGHEFLEIKNVSAAINAYRKAVDINPRD), 428 to 460 (RAWYGLGQTYQLLKLPLYSLYYFKKATTLRPYD), 461 to 494 (PRMWCAAGGCYEFIERIPEAIKCYERAEENYDRE), and 496 to 528 (VAINKLAKLYQEIQNNEKAAFYYKKNLYYCDQE). A disordered region spans residues 129 to 166 (QQQAQQQAQQAQQESQQNDKNNDTNNNNKTDQQQQQQQ).

It belongs to the APC8/CDC23 family. As to quaternary structure, the APC/C is composed of at least 13 subunits that stay tightly associated throughout the cell cycle: anapc1, anapc2, anapc3, anapc4, anapc5, anapc6, anapc7, anapc8, anapc10, anapc11, cdc20, cdc26 and cdh1.

The protein resides in the nucleus. It functions in the pathway protein modification; protein ubiquitination. Component of the anaphase promoting complex/cyclosome (APC/C), a cell cycle-regulated E3 ubiquitin-protein ligase complex that controls progression through mitosis and the G1 phase of the cell cycle. This is Anaphase-promoting complex subunit 8 (anapc8) from Dictyostelium discoideum (Social amoeba).